We begin with the raw amino-acid sequence, 216 residues long: Adenylate kinase (216 aa).

Position 10–15 (10–15 (GAGKGT)) interacts with ATP. The tract at residues 30–59 (STGDMIRETIKSDSEIGKELKKVLDAGQLV) is NMP. AMP-binding positions include threonine 31, arginine 36, 57 to 59 (QLV), and glutamine 92. The LID stretch occupies residues 122–159 (GRRVHPASGRTYHTKFNPPKVEGKDDITGEDLITRTDD). ATP-binding positions include arginine 123 and 132-133 (TY). AMP-binding residues include arginine 156 and arginine 167. Glutamine 202 provides a ligand contact to ATP.

Belongs to the adenylate kinase family. In terms of assembly, monomer.

The protein localises to the cytoplasm. The enzyme catalyses AMP + ATP = 2 ADP. Its pathway is purine metabolism; AMP biosynthesis via salvage pathway; AMP from ADP: step 1/1. Its function is as follows. Catalyzes the reversible transfer of the terminal phosphate group between ATP and AMP. Plays an important role in cellular energy homeostasis and in adenine nucleotide metabolism. The chain is Adenylate kinase from Francisella philomiragia subsp. philomiragia (strain ATCC 25017 / CCUG 19701 / FSC 153 / O#319-036).